Reading from the N-terminus, the 518-residue chain is Retinal dehydrogenase 2 (518 aa).

Tyrosine 168 is subject to Phosphotyrosine. Residues 184 to 186, 210 to 213, and 264 to 266 each bind NAD(+); these read IPW, KPAE, and STE. Glutamate 286 (proton acceptor) is an active-site residue. The active-site Nucleophile is cysteine 320. At serine 351 the chain carries Phosphoserine. Residues 366-370 and glutamate 417 each bind NAD(+); that span reads KQYNK.

The protein belongs to the aldehyde dehydrogenase family. Homotetramer.

The protein resides in the cytoplasm. It carries out the reaction retinal + NAD(+) + H2O = retinoate + NADH + 2 H(+). It catalyses the reaction all-trans-retinal + NAD(+) + H2O = all-trans-retinoate + NADH + 2 H(+). The catalysed reaction is all-trans-13,14-dihydroretinal + NAD(+) + H2O = all-trans-13,14-dihydroretinoate + NADH + 2 H(+). Its pathway is cofactor metabolism; retinol metabolism. Functionally, catalyzes the NAD-dependent oxidation of aldehyde substrates, such as all-trans-retinal and all-trans-13,14-dihydroretinal, to their corresponding carboxylic acids, all-trans-retinoate and all-trans-13,14-dihydroretinoate, respectively. Retinoate signaling is critical for the transcriptional control of many genes, for instance it is crucial for initiation of meiosis in both male and female. Recognizes retinal as substrate, both in its free form and when bound to cellular retinol-binding protein. Lacks activity with benzaldehyde, acetaldehyde and octanal. Displays complete lack of activity with citral. In Mus musculus (Mouse), this protein is Retinal dehydrogenase 2 (Aldh1a2).